Consider the following 510-residue polypeptide: Mitochondrial metal transporter 1 (510 aa).

A disordered region spans residues 120 to 141; the sequence is ADKPSSLNLHSHTHSHGHTHSH. Residues 130 to 141 are compositionally biased toward basic residues; the sequence is SHTHSHGHTHSH. Helical transmembrane passes span 165–185, 194–214, 241–261, 286–306, 333–353, and 356–376; these read WVGL…GIVF, AIHA…VGLA, LAMA…GPVI, VTDI…EWIF, LTSL…IQSL, and IGGL…MCIA.

The protein belongs to the cation diffusion facilitator (CDF) transporter (TC 2.A.4) family. SLC30A subfamily.

It localises to the mitochondrion membrane. Mitochondrial metal transporter involved in mitochondrial iron accumulation. The sequence is that of Mitochondrial metal transporter 1 (MMT1) from Saccharomyces cerevisiae (strain ATCC 204508 / S288c) (Baker's yeast).